A 142-amino-acid polypeptide reads, in one-letter code: Putative pre-16S rRNA nuclease (142 aa).

The protein belongs to the YqgF nuclease family.

It is found in the cytoplasm. Functionally, could be a nuclease involved in processing of the 5'-end of pre-16S rRNA. The sequence is that of Putative pre-16S rRNA nuclease from Staphylococcus carnosus (strain TM300).